The sequence spans 270 residues: Phosphatidate cytidylyltransferase (270 aa).

The next 7 helical transmembrane spans lie at Leu19–Ala39, Thr53–Leu73, Gly76–Trp96, Gly101–Arg121, Phe126–Tyr146, Leu183–Leu203, and Ala248–Phe268.

It belongs to the CDS family.

Its subcellular location is the cell inner membrane. It carries out the reaction a 1,2-diacyl-sn-glycero-3-phosphate + CTP + H(+) = a CDP-1,2-diacyl-sn-glycerol + diphosphate. It functions in the pathway phospholipid metabolism; CDP-diacylglycerol biosynthesis; CDP-diacylglycerol from sn-glycerol 3-phosphate: step 3/3. In Brucella suis biovar 1 (strain 1330), this protein is Phosphatidate cytidylyltransferase (cdsA).